We begin with the raw amino-acid sequence, 129 residues long: Glutaredoxin-like protein ECU08_1380 (129 aa).

Residues glutamate 26–valine 126 form the Glutaredoxin domain.

Belongs to the glutaredoxin family.

It is found in the cytoplasm. Its function is as follows. Has a glutathione-disulfide oxidoreductase activity in the presence of NADPH and glutathione reductase. Reduces low molecular weight disulfides and proteins. The polypeptide is Glutaredoxin-like protein ECU08_1380 (Encephalitozoon cuniculi (strain GB-M1) (Microsporidian parasite)).